Here is a 442-residue protein sequence, read N- to C-terminus: D-serine dehydratase 2 (442 aa).

K118 carries the post-translational modification N6-(pyridoxal phosphate)lysine.

It belongs to the serine/threonine dehydratase family. DsdA subfamily. As to quaternary structure, monomer. The cofactor is pyridoxal 5'-phosphate.

The enzyme catalyses D-serine = pyruvate + NH4(+). This Escherichia coli O6:K15:H31 (strain 536 / UPEC) protein is D-serine dehydratase 2.